The chain runs to 397 residues: MTATDPVANLQTLIRCASVTPAEGGALTALADMLLPLGFKVERMTASEAGTPDIENLYARLGTEGPHLMFAGHTDVVPVGDAASWSHPPFAADIAGGELFGRGAVDMKGGIACFAAAVARHIEKHGPPAGSISFLITGDEEGPAINGTVKLLQWAAERGEQWDASLVGEPTNPDQLGDMIKIGRRGSISGFITVHGVQGHAAYPHLADNPVRSIVKLTEALLDPPFDAGTDNFQPSNLEVTTIDVGNAATNVIPAKATAAFNIRFNDTWTVETLRAEILARLDAAAADQTLRPGREPTKYDITWSDRPSQVFLTRNNALIASLSSAVENVTGHTPKLSTTGGTSDARFIKDYCPVVEFGLVGQTMHMVDERVAVADLETLTEIYETFIQRWFANAEL.

A Zn(2+)-binding site is contributed by His-73. The active site involves Asp-75. Residue Asp-106 participates in Zn(2+) binding. Residue Glu-140 is the Proton acceptor of the active site. Positions 141, 169, and 366 each coordinate Zn(2+).

It belongs to the peptidase M20A family. DapE subfamily. In terms of assembly, homodimer. Requires Zn(2+) as cofactor. Co(2+) serves as cofactor.

It carries out the reaction N-succinyl-(2S,6S)-2,6-diaminopimelate + H2O = (2S,6S)-2,6-diaminopimelate + succinate. It functions in the pathway amino-acid biosynthesis; L-lysine biosynthesis via DAP pathway; LL-2,6-diaminopimelate from (S)-tetrahydrodipicolinate (succinylase route): step 3/3. Catalyzes the hydrolysis of N-succinyl-L,L-diaminopimelic acid (SDAP), forming succinate and LL-2,6-diaminopimelate (DAP), an intermediate involved in the bacterial biosynthesis of lysine and meso-diaminopimelic acid, an essential component of bacterial cell walls. This Rhizobium rhizogenes (strain K84 / ATCC BAA-868) (Agrobacterium radiobacter) protein is Succinyl-diaminopimelate desuccinylase.